The following is an 875-amino-acid chain: Leucine--tRNA ligase (875 aa).

Residues 57–67 (PYPSGQIHMGH) carry the 'HIGH' region motif. The short motif at 631–635 (KMSKS) is the 'KMSKS' region element. K634 contacts ATP.

It belongs to the class-I aminoacyl-tRNA synthetase family.

It is found in the cytoplasm. The enzyme catalyses tRNA(Leu) + L-leucine + ATP = L-leucyl-tRNA(Leu) + AMP + diphosphate. This is Leucine--tRNA ligase from Granulibacter bethesdensis (strain ATCC BAA-1260 / CGDNIH1).